The chain runs to 489 residues: Rhamnulokinase (489 aa).

13 to 17 lines the ATP pocket; the sequence is ASSGR. Cysteines 68 and 222 form a disulfide. Substrate-binding positions include glycine 83 and 236-238; that span reads HDT. Catalysis depends on aspartate 237, which acts as the Proton acceptor. Threonine 259 contributes to the ATP binding site. Asparagine 296 serves as a coordination point for substrate. An ATP-binding site is contributed by glutamine 304. An intrachain disulfide couples cysteine 353 to cysteine 370. Glycine 402 is an ATP binding site. The cysteines at positions 413 and 417 are disulfide-linked.

The protein belongs to the rhamnulokinase family. Monomer. Requires Mg(2+) as cofactor.

The catalysed reaction is L-rhamnulose + ATP = L-rhamnulose 1-phosphate + ADP + H(+). It functions in the pathway carbohydrate degradation; L-rhamnose degradation; glycerone phosphate from L-rhamnose: step 2/3. Functionally, involved in the catabolism of L-rhamnose (6-deoxy-L-mannose). Catalyzes the transfer of the gamma-phosphate group from ATP to the 1-hydroxyl group of L-rhamnulose to yield L-rhamnulose 1-phosphate. In Escherichia coli O7:K1 (strain IAI39 / ExPEC), this protein is Rhamnulokinase.